The following is a 104-amino-acid chain: L-rhamnose mutarotase (104 aa).

A substrate-binding site is contributed by tyrosine 18. The Proton donor role is filled by histidine 22. Substrate-binding positions include tyrosine 41 and 76-77 (WW).

The protein belongs to the rhamnose mutarotase family. As to quaternary structure, homodimer.

It is found in the cytoplasm. It catalyses the reaction alpha-L-rhamnose = beta-L-rhamnose. The protein operates within carbohydrate metabolism; L-rhamnose metabolism. In terms of biological role, involved in the anomeric conversion of L-rhamnose. The sequence is that of L-rhamnose mutarotase from Bacteroides thetaiotaomicron (strain ATCC 29148 / DSM 2079 / JCM 5827 / CCUG 10774 / NCTC 10582 / VPI-5482 / E50).